A 93-amino-acid polypeptide reads, in one-letter code: Cell division protein FtsB (93 aa).

Residues 1 to 3 are Cytoplasmic-facing; the sequence is MRL. The chain crosses the membrane as a helical span at residues 4–21; the sequence is FILVLTLLFGWLQYTLWF. At 22 to 93 the chain is on the periplasmic side; it reads GKNGVSDYYT…FYRIVGEENQ (72 aa). Positions 42-75 form a coiled coil; the sequence is VNTKLQARNSEMYAEIDDLKQGLDAIEERARHEL.

The protein belongs to the FtsB family. Part of a complex composed of FtsB, FtsL and FtsQ.

It localises to the cell inner membrane. Essential cell division protein. May link together the upstream cell division proteins, which are predominantly cytoplasmic, with the downstream cell division proteins, which are predominantly periplasmic. This Vibrio vulnificus (strain YJ016) protein is Cell division protein FtsB.